We begin with the raw amino-acid sequence, 105 residues long: Pyrimidine/purine nucleoside phosphorylase (105 aa).

The protein belongs to the nucleoside phosphorylase PpnP family.

The enzyme catalyses a purine D-ribonucleoside + phosphate = a purine nucleobase + alpha-D-ribose 1-phosphate. The catalysed reaction is adenosine + phosphate = alpha-D-ribose 1-phosphate + adenine. It carries out the reaction cytidine + phosphate = cytosine + alpha-D-ribose 1-phosphate. It catalyses the reaction guanosine + phosphate = alpha-D-ribose 1-phosphate + guanine. The enzyme catalyses inosine + phosphate = alpha-D-ribose 1-phosphate + hypoxanthine. The catalysed reaction is thymidine + phosphate = 2-deoxy-alpha-D-ribose 1-phosphate + thymine. It carries out the reaction uridine + phosphate = alpha-D-ribose 1-phosphate + uracil. It catalyses the reaction xanthosine + phosphate = alpha-D-ribose 1-phosphate + xanthine. Its function is as follows. Catalyzes the phosphorolysis of diverse nucleosides, yielding D-ribose 1-phosphate and the respective free bases. Can use uridine, adenosine, guanosine, cytidine, thymidine, inosine and xanthosine as substrates. Also catalyzes the reverse reactions. The protein is Pyrimidine/purine nucleoside phosphorylase of Wolinella succinogenes (strain ATCC 29543 / DSM 1740 / CCUG 13145 / JCM 31913 / LMG 7466 / NCTC 11488 / FDC 602W) (Vibrio succinogenes).